The following is a 164-amino-acid chain: Transcription antitermination protein NusB (164 aa).

The disordered stretch occupies residues 144–164 (KNGRGLIDHTPPRAAKTDAKS). Residues 149–164 (LIDHTPPRAAKTDAKS) show a composition bias toward basic and acidic residues.

It belongs to the NusB family.

Involved in transcription antitermination. Required for transcription of ribosomal RNA (rRNA) genes. Binds specifically to the boxA antiterminator sequence of the ribosomal RNA (rrn) operons. This Chlorobium phaeovibrioides (strain DSM 265 / 1930) (Prosthecochloris vibrioformis (strain DSM 265)) protein is Transcription antitermination protein NusB.